A 935-amino-acid polypeptide reads, in one-letter code: Probable mediator of RNA polymerase II transcription subunit 15c (935 aa).

The segment covering 1–13 (MEGNTNWKPNEQG) has biased composition (polar residues). Disordered stretches follow at residues 1 to 28 (MEGN…WRSQ), 170 to 190 (NLPT…VSSS), 495 to 526 (SSVQ…HQMQ), 548 to 611 (QQVS…PVPG), and 635 to 654 (SSSK…PPEP). Positions 511–526 (MQQQQPQQGNHQHQMQ) are enriched in low complexity. 2 stretches are compositionally biased toward polar residues: residues 548–577 (QQVS…SPQL) and 635–644 (SSSKLGTQET).

The protein belongs to the plant Mediator complex subunit 15 family. Component of the Mediator complex.

The protein resides in the nucleus. In terms of biological role, component of the Mediator complex, a coactivator involved in the regulated transcription of nearly all RNA polymerase II-dependent genes. Mediator functions as a bridge to convey information from gene-specific regulatory proteins to the basal RNA polymerase II transcription machinery. The Mediator complex, having a compact conformation in its free form, is recruited to promoters by direct interactions with regulatory proteins and serves for the assembly of a functional preinitiation complex with RNA polymerase II and the general transcription factors. The sequence is that of Probable mediator of RNA polymerase II transcription subunit 15c (MED15C) from Arabidopsis thaliana (Mouse-ear cress).